A 159-amino-acid chain; its full sequence is 2-C-methyl-D-erythritol 2,4-cyclodiphosphate synthase (159 aa).

Residues D8 and H10 each coordinate a divalent metal cation. 4-CDP-2-C-methyl-D-erythritol 2-phosphate contacts are provided by residues 8-10 and 34-35; these read DSH and HS. A divalent metal cation is bound at residue H42. 4-CDP-2-C-methyl-D-erythritol 2-phosphate-binding positions include 56–58, 61–65, F139, and R142; these read DIG and FPDSD.

It belongs to the IspF family. Homotrimer. It depends on a divalent metal cation as a cofactor.

It catalyses the reaction 4-CDP-2-C-methyl-D-erythritol 2-phosphate = 2-C-methyl-D-erythritol 2,4-cyclic diphosphate + CMP. Its pathway is isoprenoid biosynthesis; isopentenyl diphosphate biosynthesis via DXP pathway; isopentenyl diphosphate from 1-deoxy-D-xylulose 5-phosphate: step 4/6. In terms of biological role, involved in the biosynthesis of isopentenyl diphosphate (IPP) and dimethylallyl diphosphate (DMAPP), two major building blocks of isoprenoid compounds. Catalyzes the conversion of 4-diphosphocytidyl-2-C-methyl-D-erythritol 2-phosphate (CDP-ME2P) to 2-C-methyl-D-erythritol 2,4-cyclodiphosphate (ME-CPP) with a corresponding release of cytidine 5-monophosphate (CMP). The chain is 2-C-methyl-D-erythritol 2,4-cyclodiphosphate synthase from Syntrophus aciditrophicus (strain SB).